The chain runs to 448 residues: 3-phosphoshikimate 1-carboxyvinyltransferase (448 aa).

Positions 38, 39, and 43 each coordinate 3-phosphoshikimate. Lys-38 contacts phosphoenolpyruvate. 2 residues coordinate phosphoenolpyruvate: Gly-111 and Arg-140. 3-phosphoshikimate-binding residues include Ser-185, Gln-187, Asp-335, and Lys-362. Gln-187 provides a ligand contact to phosphoenolpyruvate. Asp-335 serves as the catalytic Proton acceptor. Phosphoenolpyruvate-binding residues include Arg-366 and Arg-408.

The protein belongs to the EPSP synthase family. As to quaternary structure, monomer.

Its subcellular location is the cytoplasm. It catalyses the reaction 3-phosphoshikimate + phosphoenolpyruvate = 5-O-(1-carboxyvinyl)-3-phosphoshikimate + phosphate. It participates in metabolic intermediate biosynthesis; chorismate biosynthesis; chorismate from D-erythrose 4-phosphate and phosphoenolpyruvate: step 6/7. In terms of biological role, catalyzes the transfer of the enolpyruvyl moiety of phosphoenolpyruvate (PEP) to the 5-hydroxyl of shikimate-3-phosphate (S3P) to produce enolpyruvyl shikimate-3-phosphate and inorganic phosphate. The protein is 3-phosphoshikimate 1-carboxyvinyltransferase of Gloeothece citriformis (strain PCC 7424) (Cyanothece sp. (strain PCC 7424)).